Here is a 181-residue protein sequence, read N- to C-terminus: UPF0215 protein AF_1433 (181 aa).

Belongs to the UPF0215 family.

The polypeptide is UPF0215 protein AF_1433 (Archaeoglobus fulgidus (strain ATCC 49558 / DSM 4304 / JCM 9628 / NBRC 100126 / VC-16)).